A 1608-amino-acid chain; its full sequence is Hemolysin (1608 aa).

The signal sequence occupies residues 1-30; that stretch reads MKNNNFRLSAAGKLAAALAIILAASAGAYA. Disordered regions lie at residues 296–315, 452–488, 716–737, 971–1030, 1168–1199, and 1437–1469; these read SRVD…QNYR, KSSE…LRSE, EHTR…LSGG, AVNL…SASQ, AEST…TGGN, and PQQD…QGPL. Composition is skewed to polar residues over residues 303–313 and 460–474; these read SNKNGGDNYQN and RNHT…WSNS. Composition is skewed to basic and acidic residues over residues 478 to 488 and 716 to 726; these read ESLKASELRSE and EHTRDSEKTTR. A compositionally biased stretch (polar residues) spans 727-736; sequence TENSASSLSG. The segment covering 977–996 has biased composition (basic and acidic residues); sequence DSHRSEAAANRQDEQSRDTR. Polar residues predominate over residues 1021–1030; that stretch reads TQRSNSSASQ.

The protein resides in the cell outer membrane. Bacterial hemolysins are exotoxins that attack blood cell membranes and cause cell rupture by mechanisms not clearly defined. Its function is as follows. Cell-bound hemolysin, which releases heme-iron from erythrocytes by interaction with the erythrocyte membrane. ShlA requires ShlB function. The chain is Hemolysin (shlA) from Serratia marcescens.